A 218-amino-acid polypeptide reads, in one-letter code: Peptide methionine sulfoxide reductase A2 (218 aa).

A compositionally biased stretch (polar residues) spans 1–19; the sequence is MDSSLKTQEPQVVETSPSP. The tract at residues 1–30 is disordered; that stretch reads MDSSLKTQEPQVVETSPSPVAQEPPQVADK. Residue S205 is modified to Phosphoserine.

It belongs to the MsrA Met sulfoxide reductase family.

Its subcellular location is the cytoplasm. It localises to the cytosol. It catalyses the reaction L-methionyl-[protein] + [thioredoxin]-disulfide + H2O = L-methionyl-(S)-S-oxide-[protein] + [thioredoxin]-dithiol. The catalysed reaction is [thioredoxin]-disulfide + L-methionine + H2O = L-methionine (S)-S-oxide + [thioredoxin]-dithiol. Its activity is regulated as follows. Activated during dark in short day conditions. Its function is as follows. Catalyzes the reduction of methionine sulfoxide (MetSO) to methionine in proteins. Plays a protective role against oxidative stress by restoring activity to proteins that have been inactivated by methionine oxidation. Prevents cellular oxidative damage in long nights. MSRA family specifically reduces the MetSO S-enantiomer. This is Peptide methionine sulfoxide reductase A2 (MRSA2) from Arabidopsis thaliana (Mouse-ear cress).